A 289-amino-acid chain; its full sequence is Metal-staphylopine import system permease protein CntC (289 aa).

5 helical membrane passes run 13–33, 77–97, 115–135, 194–214, and 249–269; these read AVIA…APLV, LLYV…LGFL, VMLA…FGMG, IAII…GFSF, and IAIV…QIAI. The ABC transmembrane type-1 domain occupies 73–262; the sequence is IRPSLLYVFV…IIVMAFNFLS (190 aa).

It belongs to the binding-protein-dependent transport system permease family. In terms of assembly, the complex is composed of two ATP-binding proteins (CntD and CntF), two transmembrane proteins (CntB and CntC) and a solute-binding protein (CntA).

It is found in the cell membrane. In terms of biological role, part of the ABC transporter complex CntABCDF (Opp1) involved in the uptake of metal in complex with the metallophore staphylopine (StP). May be involved in the import of a large array of divalent metals ions such as nickel, cobalt, zinc, copper and iron. Probably responsible for the translocation of the substrate across the membrane. This Staphylococcus aureus (strain Mu50 / ATCC 700699) protein is Metal-staphylopine import system permease protein CntC.